A 303-amino-acid polypeptide reads, in one-letter code: Proline dehydrogenase 2 (303 aa).

K96 serves as a coordination point for substrate. D130 is an active-site residue. FAD is bound by residues M131 and Q159. R180 is a catalytic residue. FAD-binding positions include 183-185 (KGA) and 222-223 (TH). 284–285 (RR) provides a ligand contact to substrate.

The protein belongs to the proline dehydrogenase family. Requires FAD as cofactor.

It carries out the reaction L-proline + a quinone = (S)-1-pyrroline-5-carboxylate + a quinol + H(+). It functions in the pathway amino-acid degradation; L-proline degradation into L-glutamate; L-glutamate from L-proline: step 1/2. In terms of biological role, converts proline to delta-1-pyrroline-5-carboxylate. Important for the use of proline as a sole carbon and energy source or a sole nitrogen source. The protein is Proline dehydrogenase 2 of Bacillus subtilis (strain 168).